Reading from the N-terminus, the 211-residue chain is uncharacterized protein (211 aa).

Belongs to the A.longa ORF167/ORF288 family.

It localises to the plastid. This is an uncharacterized protein from Euglena longa (Euglenophycean alga).